We begin with the raw amino-acid sequence, 260 residues long: Ribosomal protein L11 methyltransferase (260 aa).

Residues T119, G140, D162, and N203 each contribute to the S-adenosyl-L-methionine site.

The protein belongs to the methyltransferase superfamily. PrmA family.

It localises to the cytoplasm. It catalyses the reaction L-lysyl-[protein] + 3 S-adenosyl-L-methionine = N(6),N(6),N(6)-trimethyl-L-lysyl-[protein] + 3 S-adenosyl-L-homocysteine + 3 H(+). Functionally, methylates ribosomal protein L11. This Thermosipho africanus (strain TCF52B) protein is Ribosomal protein L11 methyltransferase.